The primary structure comprises 360 residues: Protein Wnt-2 (360 aa).

An N-terminal signal peptide occupies residues 1–25; it reads MNAPLCGIWLWLPLLLTWLTPEVSS. Intrachain disulfides connect cysteine 76-cysteine 87, cysteine 127-cysteine 135, cysteine 137-cysteine 157, cysteine 206-cysteine 220, cysteine 208-cysteine 215, cysteine 278-cysteine 309, cysteine 294-cysteine 304, cysteine 308-cysteine 348, cysteine 324-cysteine 339, cysteine 326-cysteine 336, and cysteine 331-cysteine 332. Serine 212 is lipidated: O-palmitoleoyl serine; by PORCN. A glycan (N-linked (GlcNAc...) asparagine) is linked at asparagine 295.

This sequence belongs to the Wnt family. Post-translationally, palmitoleoylation is required for efficient binding to frizzled receptors. Depalmitoleoylation leads to Wnt signaling pathway inhibition.

Its subcellular location is the secreted. The protein resides in the extracellular space. The protein localises to the extracellular matrix. Its function is as follows. Ligand for members of the frizzled family of seven transmembrane receptors. Functions in the canonical Wnt signaling pathway that results in activation of transcription factors of the TCF/LEF family. Functions as a upstream regulator of FGF10 expression. Plays an important role in embryonic lung development. May contribute to embryonic brain development by regulating the proliferation of dopaminergic precursors and neurons. The sequence is that of Protein Wnt-2 (WNT2) from Otolemur garnettii (Small-eared galago).